Consider the following 48-residue polypeptide: Toxin CSTX-14 (48 aa).

Cystine bridges form between cysteine 3–cysteine 18, cysteine 10–cysteine 27, cysteine 17–cysteine 42, and cysteine 29–cysteine 40.

This sequence belongs to the neurotoxin 19 (CSTX) family. 12 subfamily. In terms of assembly, heterodimer of A and B chains; disulfide-linked. Post-translationally, contains 4 disulfide bonds. As to expression, expressed by the venom gland.

Its subcellular location is the secreted. The protein is Toxin CSTX-14 of Cupiennius salei (American wandering spider).